The following is a 178-amino-acid chain: Single-stranded DNA-binding protein 2 (178 aa).

The region spanning 6 to 111 (VNKVILVGNL…VVVSQSGTMQ (106 aa)) is the SSB domain. The DNA-binding element occupies 55 to 61 (WHRVVLY). A disordered region spans residues 111–161 (QMLGGRNSAGSGQQQGGWGQPQQPAAPSHSGMPPQQHPANEPPMDFDDDIP).

Homotetramer.

The chain is Single-stranded DNA-binding protein 2 (ssb2) from Salmonella typhi.